A 419-amino-acid chain; its full sequence is Ribosome biogenesis protein NOP53 (419 aa).

Disordered stretches follow at residues Met1–Arg21 and Lys233–Gln283. A compositionally biased stretch (basic and acidic residues) spans Lys233–Ala261. A phosphoserine mark is found at Ser242, Ser249, Ser252, and Ser256. Over residues Lys269–Gln283 the composition is skewed to basic residues.

The protein belongs to the NOP53 family.

The protein resides in the nucleus. It localises to the nucleolus. Its subcellular location is the nucleoplasm. Its function is as follows. May play a role in ribosome biogenesis. The polypeptide is Ribosome biogenesis protein NOP53 (Schizosaccharomyces pombe (strain 972 / ATCC 24843) (Fission yeast)).